A 223-amino-acid chain; its full sequence is Probable tRNA-splicing endonuclease subunit tsp-1 (223 aa).

The segment at 1–55 (MESGSTPPTDKQIRENEQDGTGHQGKLLARPTSTRQQQQQQQQQPSHSVSQSVSQ) is disordered. Residues 30–55 (RPTSTRQQQQQQQQQPSHSVSQSVSQ) show a composition bias toward low complexity.

The protein belongs to the SEN15 family. In terms of assembly, tRNA splicing endonuclease is a heterotetramer composed of tsp-2/sen2, tsp-1/sen15, tsp-4/sen34 and tsp-5/sen54. Interacts directly with tsp-4/sen34.

In terms of biological role, non-catalytic subunit of the tRNA-splicing endonuclease complex, a complex responsible for identification and cleavage of the splice sites in pre-tRNA. It cleaves pre-tRNA at the 5' and 3' splice sites to release the intron. The products are an intron and two tRNA half-molecules bearing 2',3' cyclic phosphate and 5'-OH termini. There are no conserved sequences at the splice sites, but the intron is invariably located at the same site in the gene, placing the splice sites an invariant distance from the constant structural features of the tRNA body. The sequence is that of Probable tRNA-splicing endonuclease subunit tsp-1 (tsp-1) from Neurospora crassa (strain ATCC 24698 / 74-OR23-1A / CBS 708.71 / DSM 1257 / FGSC 987).